The following is a 1399-amino-acid chain: DNA-directed RNA polymerase subunit beta' (1399 aa).

Cys-71, Cys-73, Cys-86, and Cys-89 together coordinate Zn(2+). Residues Asp-462, Asp-464, and Asp-466 each coordinate Mg(2+). Zn(2+) contacts are provided by Cys-810, Cys-884, Cys-891, and Cys-894. Residues Glu-1376–Glu-1399 are disordered.

This sequence belongs to the RNA polymerase beta' chain family. The RNAP catalytic core consists of 2 alpha, 1 beta, 1 beta' and 1 omega subunit. When a sigma factor is associated with the core the holoenzyme is formed, which can initiate transcription. It depends on Mg(2+) as a cofactor. Requires Zn(2+) as cofactor.

It carries out the reaction RNA(n) + a ribonucleoside 5'-triphosphate = RNA(n+1) + diphosphate. In terms of biological role, DNA-dependent RNA polymerase catalyzes the transcription of DNA into RNA using the four ribonucleoside triphosphates as substrates. This chain is DNA-directed RNA polymerase subunit beta', found in Afipia carboxidovorans (strain ATCC 49405 / DSM 1227 / KCTC 32145 / OM5) (Oligotropha carboxidovorans).